Consider the following 481-residue polypeptide: Proline--tRNA ligase (481 aa).

This sequence belongs to the class-II aminoacyl-tRNA synthetase family. ProS type 3 subfamily. Homodimer.

It is found in the cytoplasm. It catalyses the reaction tRNA(Pro) + L-proline + ATP = L-prolyl-tRNA(Pro) + AMP + diphosphate. Functionally, catalyzes the attachment of proline to tRNA(Pro) in a two-step reaction: proline is first activated by ATP to form Pro-AMP and then transferred to the acceptor end of tRNA(Pro). In Chlorobium luteolum (strain DSM 273 / BCRC 81028 / 2530) (Pelodictyon luteolum), this protein is Proline--tRNA ligase.